A 180-amino-acid chain; its full sequence is Large ribosomal subunit protein uL6 (180 aa).

This sequence belongs to the universal ribosomal protein uL6 family. As to quaternary structure, part of the 50S ribosomal subunit.

This protein binds to the 23S rRNA, and is important in its secondary structure. It is located near the subunit interface in the base of the L7/L12 stalk, and near the tRNA binding site of the peptidyltransferase center. The polypeptide is Large ribosomal subunit protein uL6 (Anaeromyxobacter dehalogenans (strain 2CP-C)).